An 885-amino-acid chain; its full sequence is Leucine--tRNA ligase (885 aa).

A 'HIGH' region motif is present at residues 43–53 (PYTSGQLHMGH). Positions 571-575 (KMSKS) match the 'KMSKS' region motif. Position 574 (K574) interacts with ATP. Residues 866–885 (SVANKAEPGRPAIHVDEADD) form a disordered region.

This sequence belongs to the class-I aminoacyl-tRNA synthetase family.

The protein localises to the cytoplasm. It carries out the reaction tRNA(Leu) + L-leucine + ATP = L-leucyl-tRNA(Leu) + AMP + diphosphate. This chain is Leucine--tRNA ligase, found in Halobacterium salinarum (strain ATCC 700922 / JCM 11081 / NRC-1) (Halobacterium halobium).